The following is a 347-amino-acid chain: MNPLTFTMITSTIILGTSIVITSSHWLTVWIGFEMNMLAIIPVLMKTHHPRSTEAATKYFLIQATASMLLMLAVTINLLSSGQWAVSNMIDPLALTIMTLALAMKLGLSPFHFWVPEVTQGVPLLSGLILLTWQKLAPLSILCTLSPNIDPTLILTMSILSVLVGGWGGLNQTQLRKIMAYSSISHMGWMTAILIYNPSLTILNLLLYIMMTSTTFILLIITSSTTTLSLSHTWNKTPLIAIIILTTMLSLGGLPPLTGFMPKWMILQDLTKNENIALSLFMAMAALLNLYFYTRLTYTTSLTMLPTTNNTKIKWHFKTTKQAASLSPLIIISTMILPLTPTMSALW.

10 consecutive transmembrane segments (helical) span residues 13 to 33 (IILG…WIGF), 59 to 79 (YFLI…INLL), 84 to 104 (WAVS…ALAM), 111 to 131 (FHFW…LILL), 149 to 169 (IDPT…GWGG), 178 to 198 (IMAY…IYNP), 201 to 221 (TILN…LLII), 240 to 260 (IAII…LTGF), 276 to 296 (IALS…YTRL), and 326 to 346 (LSPL…MSAL).

Belongs to the complex I subunit 2 family. As to quaternary structure, core subunit of respiratory chain NADH dehydrogenase (Complex I) which is composed of 45 different subunits. Interacts with TMEM242.

It is found in the mitochondrion inner membrane. It catalyses the reaction a ubiquinone + NADH + 5 H(+)(in) = a ubiquinol + NAD(+) + 4 H(+)(out). Its function is as follows. Core subunit of the mitochondrial membrane respiratory chain NADH dehydrogenase (Complex I) that is believed to belong to the minimal assembly required for catalysis. Complex I functions in the transfer of electrons from NADH to the respiratory chain. The immediate electron acceptor for the enzyme is believed to be ubiquinone. The polypeptide is NADH-ubiquinone oxidoreductase chain 2 (Chrotopterus auritus (Peters's woolly false vampire bat)).